The chain runs to 539 residues: Capsid protein VP1 (539 aa).

Positions 1–221 (MKMASNDANP…FIFLVPPTVE (221 aa)) are shell domain. The P1 sub-domain 1 stretch occupies residues 222–274 (SRTKPFTVPVLTVEEMSNSRFPIPLEKLYTGPSSAFVVQPQNGRCTTDGVLLG). Residues 222–539 (SRTKPFTVPV…GNGTGRRRAL (318 aa)) are protruding domain. Residues 275 to 417 (TTQLSAVNIC…SGRTGHNVHL (143 aa)) are P2 sub-domain. Residues 418–539 (APAVAPTFPG…GNGTGRRRAL (122 aa)) are P1 sub-domain 2.

This sequence belongs to the caliciviridae capsid protein family. As to quaternary structure, homodimer. Homomultimer. Interacts with the minor capsid protein VP2. Interacts (via C-terminus) with host type I histo-blood group structures antigens at the surface of target cells. May be cleaved by host protease to generate soluble capsid protein. Assembled capsid cannot be cleaved.

It localises to the virion. The protein resides in the host cytoplasm. Functionally, capsid protein self assembles to form an icosahedral capsid with a T=3 symmetry, about 38 nm in diameter, and consisting of 180 capsid proteins. A smaller form of capsid with a diameter of 23 nm might be capsid proteins assembled as icosahedron with T=1 symmetry. The capsid encapsulates the genomic RNA and is decorated with VP2 proteins. Attaches virion to target cells by binding histo-blood group antigens (HBGAs) present on gastroduodenal epithelial cells. In terms of biological role, the soluble capsid protein may play a role in viral immunoevasion. This is Capsid protein VP1 from Homo sapiens (Human).